A 104-amino-acid polypeptide reads, in one-letter code: Endogenous retrovirus group K member 21 Rec protein (104 aa).

The segment at 1-48 (MHPSEMQRKAPPRRRRHRNRAPLTHKMNKMVTSEQMKLPSTKKAEPPT) is disordered. The span at 10–20 (APPRRRRHRNR) shows a compositional bias: basic residues. Positions 13 to 20 (RRRRHRNR) match the Nuclear localization signal motif. A Nuclear export signal motif is present at residues 49–58 (WAQLKKLTQL).

In terms of assembly, forms homodimers, homotrimers, and homotetramers via a C-terminal domain. Associates with XPO1 and with ZNF145.

The protein localises to the cytoplasm. It is found in the nucleus. It localises to the nucleolus. In terms of biological role, retroviral replication requires the nuclear export and translation of unspliced, singly-spliced and multiply-spliced derivatives of the initial genomic transcript. Rec interacts with a highly structured RNA element (RcRE) present in the viral 3'LTR and recruits the cellular nuclear export machinery. This permits export to the cytoplasm of unspliced genomic or incompletely spliced subgenomic viral transcripts. The sequence is that of Endogenous retrovirus group K member 21 Rec protein (ERVK-21) from Homo sapiens (Human).